Consider the following 201-residue polypeptide: NADH-quinone oxidoreductase subunit I (201 aa).

4Fe-4S ferredoxin-type domains lie at 78–107 (MSYEKAKSRCVACYMCQTACPMPTLFRIEA) and 116–147 (KVVRFDMNLLNCLFCGLCVDACPVGCLTMTDI). [4Fe-4S] cluster-binding residues include Cys87, Cys90, Cys93, Cys97, Cys127, Cys130, Cys133, and Cys137.

Belongs to the complex I 23 kDa subunit family. In terms of assembly, NDH-1 is composed of 14 different subunits. Subunits NuoA, H, J, K, L, M, N constitute the membrane sector of the complex. [4Fe-4S] cluster is required as a cofactor.

It is found in the cell inner membrane. It catalyses the reaction a quinone + NADH + 5 H(+)(in) = a quinol + NAD(+) + 4 H(+)(out). In terms of biological role, NDH-1 shuttles electrons from NADH, via FMN and iron-sulfur (Fe-S) centers, to quinones in the respiratory chain. The immediate electron acceptor for the enzyme in this species is believed to be ubiquinone. Couples the redox reaction to proton translocation (for every two electrons transferred, four hydrogen ions are translocated across the cytoplasmic membrane), and thus conserves the redox energy in a proton gradient. The protein is NADH-quinone oxidoreductase subunit I of Aquifex aeolicus (strain VF5).